A 97-amino-acid chain; its full sequence is uncharacterized protein (97 aa).

An N-terminal signal peptide occupies residues 1 to 16; that stretch reads MKQTVLLLFTALFLSG. The N-palmitoyl cysteine moiety is linked to residue Cys-17. A lipid anchor (S-diacylglycerol cysteine) is attached at Cys-17.

The protein resides in the cell membrane. This is an uncharacterized protein from Bacillus subtilis (strain 168).